A 154-amino-acid polypeptide reads, in one-letter code: Large ribosomal subunit protein uL13 (154 aa).

Belongs to the universal ribosomal protein uL13 family. Part of the 50S ribosomal subunit.

Functionally, this protein is one of the early assembly proteins of the 50S ribosomal subunit, although it is not seen to bind rRNA by itself. It is important during the early stages of 50S assembly. The chain is Large ribosomal subunit protein uL13 from Agrobacterium fabrum (strain C58 / ATCC 33970) (Agrobacterium tumefaciens (strain C58)).